The sequence spans 547 residues: Regulator of G-protein signaling 14 (547 aa).

Positions 19 to 59 (VSDGELTSTAGSQAQGEGRGSSLSIHSLPSGPSSPFSTEEQ) are disordered. A phosphoserine mark is found at Ser-20, Ser-42, Ser-45, Ser-143, Ser-199, Ser-203, and Ser-218. The segment covering 23–58 (ELTSTAGSQAQGEGRGSSLSIHSLPSGPSSPFSTEE) has biased composition (polar residues). Residues 67-184 (SFERLLQDPR…VKSPLYQECL (118 aa)) form the RGS domain. The interval 191–220 (RPLREPGSSHLGSPDTARKKPKLKPGKSLP) is disordered. Thr-249 carries the phosphothreonine modification. Position 289 is a phosphoserine (Ser-289). The tract at residues 300–427 (RPGKYCCVYL…LHRPGEKQPM (128 aa)) is necessary for interaction with RABGEF1. RBD domains follow at residues 303–374 (KYCC…LENR) and 376–446 (TFQL…LDTP). The segment at 447–496 (PDAKMSEARSISPCRSQGCLPRTQTKDSHLPPSSSSLLVEDASSSTGNRQ) is disordered. The span at 476–491 (LPPSSSSLLVEDASSS) shows a compositional bias: low complexity. Residues 500-522 (IEGLVELLNRVQSSGAHDQRGLL) form the GoLoco domain.

As to quaternary structure, interacts with GNAI1 and GNAI2. Interacts with GNAI3. Interacts with GNAO1. Interacts (via RGS and GoLoco domains) with GNAI1; the interaction occurs in the centrosomes. Interaction with GNAI1 or GNAI3 (via active GTP- or inactive GDP-bound forms) prevents association of RGS14 with centrosomes or nuclear localization. Interacts with RABGEF1; the interactions is GTP-dependent. Interacts with RAP2A; the interactions is GTP-dependent and does not alter its function on G(i) alpha subunits either as GAP or as GDI. Associates with microtubules. Found in a complex with at least BRAF, HRAS, MAP2K1, MAPK3 and RGS14. Interacts with RIC8A (via C-terminus). Interacts (via RBD 1 domain) with HRAS (active GTP-bound form preferentially). Interacts (via RBD domains) with BRAF (via N-terminus); the interaction mediates the formation of a ternary complex with RAF1. Interacts (via RBD domains) with RAF1 (via N-terminus); the interaction mediates the formation of a ternary complex with BRAF. Interacts with KRAS (active GTP-bound form preferentially), MRAS (active GTP-bound form preferentially), NRAS (active GTP-bound form preferentially) and RRAS (active GTP-bound form preferentially). In terms of processing, phosphorylated by PKC. Phosphorylation is increased in presence of forskolin and may enhance the GDI activity on G(i) alpha subunit GNAI1. As to expression, expressed in pyramidal neurons of the CA1, CA2 and fasciola cinerea (FC) subregions of the hippocampus and in the olfactory cortex (at protein level). Expressed in brain, spleen, heart, liver, lung, kidney, skin and thymus (at protein level). Expressed in granular layer of the cerebellum, forbrain, striatum, layer V of the cortex, olfactory cortex, tubercules, subthalamic and hippocampus, particularly in the CA2 region, to a lesser extent in the CA1 region and the external layer of the dentate gyrus. Expressed in neurons.

The protein localises to the nucleus. Its subcellular location is the PML body. It is found in the cytoplasm. It localises to the membrane. The protein resides in the cell membrane. The protein localises to the cytoskeleton. Its subcellular location is the spindle. It is found in the spindle pole. It localises to the microtubule organizing center. The protein resides in the centrosome. The protein localises to the cell projection. Its subcellular location is the dendrite. It is found in the dendritic spine. It localises to the postsynaptic density. Functionally, regulates G protein-coupled receptor signaling cascades. Inhibits signal transduction by increasing the GTPase activity of G protein alpha subunits, thereby driving them into their inactive GDP-bound form. Besides, modulates signal transduction via G protein alpha subunits by functioning as a GDP-dissociation inhibitor (GDI). Has GDI activity on G(i) alpha subunits GNAI1 and GNAI3, but not on GNAI2 and G(o)-alpha subunit GNAO1. Has GAP activity on GNAI0, GNAI2 and GNAI3. May act as a scaffold integrating G protein and Ras/Raf MAPkinase signaling pathways. Inhibits platelet-derived growth factor (PDGF)-stimulated ERK1/ERK2 phosphorylation; a process depending on its interaction with HRAS and that is reversed by G(i) alpha subunit GNAI1. Acts as a positive modulator of microtubule polymerisation and spindle organization through a G(i)-alpha-dependent mechanism. Plays a role in cell division; required for completion of the first mitotic division of the embryo. Involved in visual memory processing capacity; when overexpressed in the V2 secondary visual cortex area. Involved in hippocampal-based learning and memory; acts as a suppressor of synaptic plasticity in CA2 neurons. Required for the nerve growth factor (NGF)-mediated neurite outgrowth. Involved in stress resistance. This Mus musculus (Mouse) protein is Regulator of G-protein signaling 14 (Rgs14).